A 444-amino-acid polypeptide reads, in one-letter code: Trigger factor (444 aa).

Residues 161–246 (GDRVVIDFKG…VQKVEGQKLP (86 aa)) enclose the PPIase FKBP-type domain.

This sequence belongs to the FKBP-type PPIase family. Tig subfamily.

It localises to the cytoplasm. The catalysed reaction is [protein]-peptidylproline (omega=180) = [protein]-peptidylproline (omega=0). Functionally, involved in protein export. Acts as a chaperone by maintaining the newly synthesized protein in an open conformation. Functions as a peptidyl-prolyl cis-trans isomerase. The polypeptide is Trigger factor (Saccharophagus degradans (strain 2-40 / ATCC 43961 / DSM 17024)).